We begin with the raw amino-acid sequence, 212 residues long: Pyrrolidone-carboxylate peptidase (212 aa).

Residues Glu-80, Cys-143, and His-165 contribute to the active site.

The protein belongs to the peptidase C15 family. In terms of assembly, homotetramer.

It localises to the cytoplasm. It catalyses the reaction Release of an N-terminal pyroglutamyl group from a polypeptide, the second amino acid generally not being Pro.. Functionally, removes 5-oxoproline from various penultimate amino acid residues except L-proline. The protein is Pyrrolidone-carboxylate peptidase of Vibrio campbellii (strain ATCC BAA-1116).